Consider the following 143-residue polypeptide: Small ribosomal subunit protein uS12 (143 aa).

Positions 1–20 are enriched in basic residues; it reads MGKCRGLRTARKLRSHRRDQ. Residues 1 to 26 are disordered; sequence MGKCRGLRTARKLRSHRRDQKWHDKQ. Lys-37 participates in a covalent cross-link: Glycyl lysine isopeptide (Lys-Gly) (interchain with G-Cter in SUMO2). Lys-54 bears the N6-succinyllysine mark. Pro-62 is modified (3-hydroxyproline). Lys-135 is subject to N6-acetyllysine.

This sequence belongs to the universal ribosomal protein uS12 family. In terms of assembly, component of the 40S small ribosomal subunit. Part of the small subunit (SSU) processome, composed of more than 70 proteins and the RNA chaperone small nucleolar RNA (snoRNA) U3. In terms of processing, hydroxylation at Pro-62 affects translation termination efficiency.

It is found in the cytoplasm. The protein resides in the cytosol. The protein localises to the rough endoplasmic reticulum. It localises to the nucleus. Its subcellular location is the nucleolus. Functionally, component of the ribosome, a large ribonucleoprotein complex responsible for the synthesis of proteins in the cell. The small ribosomal subunit (SSU) binds messenger RNAs (mRNAs) and translates the encoded message by selecting cognate aminoacyl-transfer RNA (tRNA) molecules. The large subunit (LSU) contains the ribosomal catalytic site termed the peptidyl transferase center (PTC), which catalyzes the formation of peptide bonds, thereby polymerizing the amino acids delivered by tRNAs into a polypeptide chain. The nascent polypeptides leave the ribosome through a tunnel in the LSU and interact with protein factors that function in enzymatic processing, targeting, and the membrane insertion of nascent chains at the exit of the ribosomal tunnel. Plays an important role in translational accuracy. Part of the small subunit (SSU) processome, first precursor of the small eukaryotic ribosomal subunit. During the assembly of the SSU processome in the nucleolus, many ribosome biogenesis factors, an RNA chaperone and ribosomal proteins associate with the nascent pre-rRNA and work in concert to generate RNA folding, modifications, rearrangements and cleavage as well as targeted degradation of pre-ribosomal RNA by the RNA exosome. In Bos taurus (Bovine), this protein is Small ribosomal subunit protein uS12 (RPS23).